A 68-amino-acid polypeptide reads, in one-letter code: Purkinje cell protein 4-like protein 1 (68 aa).

Polar residues predominate over residues 1 to 16; that stretch reads MSELNTKTSPATNQAA. A disordered region spans residues 1–45; that stretch reads MSELNTKTSPATNQAAGQEEKGKAGNVKKAEEEEEIDIDLTAPET. Thr-8 is subject to Phosphothreonine. The span at 18 to 31 shows a compositional bias: basic and acidic residues; it reads QEEKGKAGNVKKAE. The region spanning 45-68 is the IQ domain; sequence TEKAALAIQGKFRRFQKRKKDPSS.

This sequence belongs to the PCP4 family.

The chain is Purkinje cell protein 4-like protein 1 (PCP4L1) from Homo sapiens (Human).